The following is a 1175-amino-acid chain: Potassium/sodium hyperpolarization-activated cyclic nucleotide-gated channel 4 (1175 aa).

The Cytoplasmic portion of the chain corresponds to 1-259; that stretch reads MDKLPPSMRK…SAGFWIIHPY (259 aa). The interval 17-186 is disordered; the sequence is QQVGAKAWIM…SSCGEQRPAD (170 aa). Residues 26–36 show a composition bias toward acidic residues; the sequence is MDEEEDAEEEG. A compositionally biased stretch (low complexity) spans 60–75; it reads PSAAAAAAGGAESRGA. Over residues 111–126 the composition is skewed to gly residues; it reads SRGGGGGGGSTGGGSH. Positions 128–140 are enriched in basic and acidic residues; it reads HLHDSAEERRLIA. Ser145 is modified (phosphoserine). Residues 162–175 are compositionally biased toward pro residues; it reads PGAPAPPAASPPQV. The helical transmembrane segment at 260 to 288 threads the bilayer; that stretch reads SDFRFYWDLTMLLLMVGNLIIIPVGITFF. Over 289-292 the chain is Extracellular; sequence KDEN. The chain crosses the membrane as a helical span at residues 293–316; sequence TTPWIVFNVVSDTFFLIDLVLNFR. Over 317–329 the chain is Cytoplasmic; sequence TGIVVEDNTDIIL. The helical transmembrane segment at 330–352 threads the bilayer; it reads DPRRIKMKYLKSWFVVDFVSSIP. Residues 353-374 are Extracellular-facing; the sequence is VDYIFLIVETRIDSEVYKTARA. A helical; Voltage-sensor membrane pass occupies residues 375-410; that stretch reads LRIVRFTKILSLLRLLRLSRLIRYIHQWEEIFHMTY. Residues 411 to 413 lie on the Cytoplasmic side of the membrane; the sequence is DLA. Residues 414–444 traverse the membrane as a helical segment; it reads SAVVRIVNLIGMMLLLCHWDGCLQFLVPMLQ. The Extracellular portion of the chain corresponds to 445 to 449; sequence DFPDD. The pore-forming intramembrane region spans 450–478; the sequence is CWVSLNNMVNNSWGKQYSYALFKAMSHML. Residues 479-488 are Extracellular-facing; sequence CIGYGRQAPM. The chain crosses the membrane as a helical span at residues 489 to 521; that stretch reads GMSDVWLTMLSMIVGATCYAMFIGHATALIQSL. The Cytoplasmic portion of the chain corresponds to 522-1175; that stretch reads DSSRRQYQEK…PVRSKLPSNL (654 aa). The 3',5'-cyclic GMP site is built by Tyr560, Lys563, Phe565, and Glu567. The 3',5'-cyclic AMP site is built by Gly660, Glu661, Cys663, Arg670, Thr671, Val674, and Arg711. 2 disordered regions span residues 801–820 and 830–1175; these read AIFRPPPGPTTLGSLGAGQT and LAPS…PSNL. Composition is skewed to low complexity over residues 839 to 854, 900 to 912, 948 to 966, and 984 to 1004; these read SPASSPSQPDTPSSAS, LGGSLSSSDSPLL, SPTSSPGQLGQPPGELSPG, and RLPFAAGASAGASPVAFSPRG. Positions 1038–1050 are enriched in pro residues; sequence ASSPPPPPPPPAP. Phosphoserine occurs at positions 1089 and 1093. Positions 1102 to 1114 are enriched in pro residues; that stretch reads PPFPRAPGRPPGA.

Belongs to the potassium channel HCN family. As to quaternary structure, homotetramer. The channel is composed of a homo- or heterotetrameric complex of pore-forming subunits. Interacts with PEX5L with a 4:4 HCN4:PEX5L stoichiometry; reduces the effects of cAMP on the voltage-dependence and rate of activation. Interacts with IRAG1; regulates HCN4 channel activity. Interacts with IRAG2; regulates HCN4 channel activity. In terms of processing, S-palmitoylated. Highly expressed in the heart sinoatrial node (SAN). Not detected in atrium, ventricle, forebrain or cerebellum. Detected at very low levels in total brain.

Its subcellular location is the cell membrane. It catalyses the reaction K(+)(in) = K(+)(out). It carries out the reaction Na(+)(in) = Na(+)(out). With respect to regulation, activated by cAMP and to a lesser extent by cGMP and cCMP. cAMP binding causes a conformation change that leads to the assembly of an active tetramer and channel opening by shifting the voltage-dependency towards more positive voltages. Binding of cAMP removes a tonic inhibition conferred by cyclic nucleotide-binding domain (CNBD) on channel opening. Cyclic dinucleotides can modulate HCN4 channel; cyclic dinucleotides acting as potent antagonists of cAMP. Inhibited by extracellular Cs(+) ions. Auxiliary subunits can also regulate HCN4 channel. IRAG1 causes a gain-of-function by shifting HCN4 activation to more depolarized membrane potentials in the absence of cAMP. In contrast, IRAG2 causes a loss-of-function by inhibiting cAMP-dependent potentiation of HCN4 activation. In terms of biological role, hyperpolarization-activated ion channel that are permeable to Na(+) and K(+) ions with very slow activation and inactivation. Exhibits higher selectivity for K(+) over Na(+) ions. Contributes to the native pacemaker currents in heart (If) that regulate the rhythm of heart beat. Contributes to the native pacemaker currents in neurons (Ih). May mediate responses to sour stimuli. This Oryctolagus cuniculus (Rabbit) protein is Potassium/sodium hyperpolarization-activated cyclic nucleotide-gated channel 4 (HCN4).